The chain runs to 325 residues: Beta-ketoacyl-[acyl-carrier-protein] synthase III (325 aa).

Residues Cys114 and His252 contribute to the active site. Positions 253 to 257 are ACP-binding; that stretch reads QANFR. The active site involves Asn282.

Belongs to the thiolase-like superfamily. FabH family. In terms of assembly, homodimer.

The protein resides in the cytoplasm. It carries out the reaction malonyl-[ACP] + acetyl-CoA + H(+) = 3-oxobutanoyl-[ACP] + CO2 + CoA. It functions in the pathway lipid metabolism; fatty acid biosynthesis. In terms of biological role, catalyzes the condensation reaction of fatty acid synthesis by the addition to an acyl acceptor of two carbons from malonyl-ACP. Catalyzes the first condensation reaction which initiates fatty acid synthesis and may therefore play a role in governing the total rate of fatty acid production. Possesses both acetoacetyl-ACP synthase and acetyl transacylase activities. Its substrate specificity determines the biosynthesis of branched-chain and/or straight-chain of fatty acids. This Novosphingobium aromaticivorans (strain ATCC 700278 / DSM 12444 / CCUG 56034 / CIP 105152 / NBRC 16084 / F199) protein is Beta-ketoacyl-[acyl-carrier-protein] synthase III.